The chain runs to 220 residues: Uracil-DNA glycosylase 1 (220 aa).

Aspartate 65 serves as the catalytic Proton acceptor.

Belongs to the uracil-DNA glycosylase (UDG) superfamily. UNG family.

The protein resides in the cytoplasm. It catalyses the reaction Hydrolyzes single-stranded DNA or mismatched double-stranded DNA and polynucleotides, releasing free uracil.. Its function is as follows. Excises uracil residues from the DNA which can arise as a result of misincorporation of dUMP residues by DNA polymerase or due to deamination of cytosine. This chain is Uracil-DNA glycosylase 1, found in Bacteroides fragilis (strain YCH46).